The sequence spans 1378 residues: MAQTFLGQKRLRKYYGKIREVLEMPNLIEVQKSSYDLFLNSGDAPQPLDGEGIMGVFQSVFPIKDFNETSVLEFVKYELEKPKYDVEECMQRDMTYSAPLKVTLRLIVFDVDEDTGAKSVKDIKEQDVFMGDMPLMTPNGTFIVNGTERVIVSQMHRSPGVFFDHDKGKTHSSGKLLFACRIIPYRGSWLDFEFDAKDIVFARIDRRRKLPVTTLLYALGLDQEGIMDAYFKTVSYRLEKKRGWVTPFFPERVRGTRPTYDLIDAASGEVIAEAGKKVTPRAVKKLIEEGSVTDLLVPFDHIVGKFAAKDIINEETGAIYVEAGDELTLEYDKDGDLIGGTVKELIDNGVTNIPVLDIDNINVGPYIRNTMAQDKNMNRETALMDIYRVMRPGEPPTVEAASALFDTLFFDSERYDLSAVGRVKMNMRLDLDAADTQRTLRREDIIACIKALVELRDGKGDIDDIDHLGNRRVRSVGELMENQYRVGLLRMERAIKERMSSVEIDTVMPQDLINAKPAAAAVREFFGSSQLSQFMDQTNPLSEVTHKRRLSALGPGGLTRERAGFEVRDVHPTHYGRMCPIETPEGPNIGLINSLATFARVNKYGFIETPYRVVKGGQVTDEVHYMSATEEMRHTVAQANATLDENGKFVNELVNTRQAGDYTLAPMESVDLIDVSPKQLVSVAASLIPFLENDDANRALMGSNMQRQAVPLLRAEAPLVGTGIEEKVAIDSGAAIQAKRAGIIDQIDAQRIVIRATEDLELGDAGVDIYRMRKFQRSNQNTCINQRPLVKVGQQVSKGEVIADGPSTDMGELALGKNVVVAFMPWNGYNYEDSILISERIARDDVFTSIHIEEFEVAARDTKLGPEEITRDIPNVGEEALRNLDEAGIVYIGAEVQPGDILVGKITPKGESPMTPEEKLLRAIFGEKASDVRDTSLRVKPGDYGTVVEVRVFNRHGVDKDERALQIEREEVERLARDRDDELAILDRNIYARLKSLILGKTAVKGPKGIKPGSEITEELLETLTRGQWWMLALEGEQDAQIVEALNEQYELQKRALDARFEDKVEKVRRGDDLPPGVMKMVKVFIAVKRKLQPGDKMAGRHGNKGVISKVVPMEDMPFLADGTPVDFCLNPLGVPSRMNVGQILETHMGWAARGLGLNVDEALQEYRRSGDLTPVRDAMKHAYGEDVYAEGISGMDEDTLVEAAGNVTRGVPIATPVFDGAKEADVNDALTRAGFDTSGQSVLFDGRTGEQFARPVTVGIKYLLKLHHLVDDKIHARSTGPYSLVTQQPLGGKAQFGGQRFGEMEVWALEAYGAAYTLQEMLTVKSDDVAGRTKVYESIVKGEDNFEAGIPESFNVLVKEVRGLGLNMELLDAEVEE.

The protein belongs to the RNA polymerase beta chain family. In terms of assembly, the RNAP catalytic core consists of 2 alpha, 1 beta, 1 beta' and 1 omega subunit. When a sigma factor is associated with the core the holoenzyme is formed, which can initiate transcription.

It carries out the reaction RNA(n) + a ribonucleoside 5'-triphosphate = RNA(n+1) + diphosphate. Its function is as follows. DNA-dependent RNA polymerase catalyzes the transcription of DNA into RNA using the four ribonucleoside triphosphates as substrates. In Ruegeria pomeroyi (strain ATCC 700808 / DSM 15171 / DSS-3) (Silicibacter pomeroyi), this protein is DNA-directed RNA polymerase subunit beta.